A 255-amino-acid polypeptide reads, in one-letter code: Protein BEAN1 (255 aa).

Residues 37–57 (VLVASAVIGVVITLSCITIIV) traverse the membrane as a helical segment. The span at 69–90 (QRHHHRHRRHHHHHRHRRRRHR) shows a compositional bias: basic residues. 2 disordered regions span residues 69-109 (QRHH…MPYA) and 160-255 (DAPP…ERIV). The span at 193–206 (QRTQGQSRLHTVSM) shows a compositional bias: polar residues. The segment covering 217–226 (GTGSPSDLLP) has biased composition (low complexity). The span at 234 to 243 (PSNSQGSPIP) shows a compositional bias: polar residues. Residues 244-255 (TQAPMPSPERIV) are compositionally biased toward pro residues.

Interacts with NEDD4.

It is found in the membrane. This is Protein BEAN1 (Bean1) from Mus musculus (Mouse).